A 91-amino-acid polypeptide reads, in one-letter code: Acylphosphatase (91 aa).

In terms of domain architecture, Acylphosphatase-like spans 4–91 (RAIVTIKGLV…GEFDDFDVRY (88 aa)). Residues R19 and N37 contribute to the active site.

The protein belongs to the acylphosphatase family.

It catalyses the reaction an acyl phosphate + H2O = a carboxylate + phosphate + H(+). This is Acylphosphatase (acyP) from Geobacter sulfurreducens (strain ATCC 51573 / DSM 12127 / PCA).